Here is a 2440-residue protein sequence, read N- to C-terminus: MSSSGYPPNQGAFSTEQSRYPPHSVQYTFPNTRHQQEFAVPDYRSSHLEVSQASQLLQQQQQQQLRRRPSLLSEFHPGSDRPQERRTSYEPFHPGPSPVDHDSLESKRPRLEQVSDSHFQRVSAAVLPLVHPLPEGLRASADAKKDPAFGGKHEAPSSPISGQPCGDDQNASPSKLSKEELIQSMDRVDREIAKVEQQILKLKKKQQQLEEEAAKPPEPEKPVSPPPVEQKHRSIVQIIYDENRKKAEEAHKIFEGLGPKVELPLYNQPSDTKVYHENIKTNQVMRKKLILFFKRRNHARKQREQKICQRYDQLMEAWEKKVDRIENNPRRKAKESKTREYYEKQFPEIRKQREQQERFQRVGQRGAGLSATIARSEHEISEIIDGLSEQENNEKQMRQLSVIPPMMFDAEQRRVKFINMNGLMEDPMKVYKDRQFMNVWTDHEKEIFKDKFIQHPKNFGLIASYLERKSVPDCVLYYYLTKKNENYKALVRRNYGKRRGRNQQIARPSQEEKVEEKEEDKAEKTEKKEEEKKDEEEKDEKEDSKENTKEKDKIDGTAEETEEREQATPRGRKTANSQGRRKGRITRSMTNEAAAASAAAAAATEEPPPPLPPPPEPISTEPVETSRWTEEEMEVAKKGLVEHGRNWAAIAKMVGTKSEAQCKNFYFNYKRRHNLDNLLQQHKQKTSRKPREERDVSQCESVASTVSAQEDEDIEASNEEENPEDSEVEAVKPSEDSPENATSRGNTEPAVELEPTTETAPSTSPSLAVPSTKPAEDESVETQVNDSISAETAEQMDVDQQEHSAEEGSVCDPPPATKADSVDVEVRVPENHASKVEGDNTKERDLDRASEKVEPRDEDLVVAQQINAQRPEPQSDNDSSATCSADEDVDGEPERQRMFPMDSKPSLLNPTGSILVSSPLKPNPLDLPQLQHRAAVIPPMVSCTPCNIPIGTPVSGYALYQRHIKAMHESALLEEQRQRQEQIDLECRSSTSPCGTSKSPNREWEVLQPAPHQVITNLPEGVRLPTTRPTRPPPPLIPSSKTTVASEKPSFIMGGSISQGTPGTYLTSHNQASYTQETPKPSVGSISLGLPRQQESAKSATLPYIKQEEFSPRSQNSQPEGLLVRAQHEGVVRGTAGAIQEGSITRGTPTSKISVESIPSLRGSITQGTPALPQTGIPTEALVKGSISRMPIEDSSPEKGREEAASKGHVIYEGKSGHILSYDNIKNAREGTRSPRTAHEISLKRSYESVEGNIKQGMSMRESPVSAPLEGLICRALPRGSPHSDLKERTVLSGSIMQGTPRATTESFEDGLKYPKQIKRESPPIRAFEGAITKGKPYDGITTIKEMGRSIHEIPRQDILTQESRKTPEVVQSTRPIIEGSISQGTPIKFDNNSGQSAIKHNVKSLITGPSKLSRGMPPLEIVPENIKVVERGKYEDVKAGETVRSRHTSVVSSGPSVLRSTLHEAPKAQLSPGIYDDTSARRTPVSYQNTMSRGSPMMNRTSDVTISSNKSTNHERKSTLTPTQRESIPAKSPVPGVDPVVSHSPFDPHHRGSTAGEVYRSHLPTHLDPAMPFHRALDPAAAAYLFQRQLSPTPGYPSQYQLYAMENTRQTILNDYITSQQMQVNLRPDVARGLSPREQPLGLPYPATRGIIDLTNMPPTILVPHPGGTSTPPMDRITYIPGTQITFPPRPYNSASMSPGHPTHLAAAASAEREREREREKERERERIAAASSDLYLRPGSEQPGRPGSHGYVRSPSPSVRTQETMLQQRPSVFQGTNGTSVITPLDPTAQLRIMPLPAGGPSISQGLPASRYNTAADALAALVDAAASAPQMDVSKTKESKHEAARLEENLRSRSAAVSEQQQLEQKTLEVEKRSVQCLYTSSAFPSGKPQPHSSVVYSEAGKDKGPPPKSRYEEELRTRGKTTITAANFIDVIITRQIASDKDARERGSQSSDSSSSLSSHRYETPSDAIEVISPASSPAPPQEKLQTYQPEVVKANQAENDPTRQYEGPLHHYRPQQESPSPQQQLPPSSQAEGMGQVPRTHRLITLADHICQIITQDFARNQVSSQTPQQPPTSTFQNSPSALVSTPVRTKTSNRYSPESQAQSVHHQRPGSRVSPENLVDKSRGSRPGKSPERSHVSSEPYEPISPPQVPVVHEKQDSLLLLSQRGAEPAEQRNDARSPGSISYLPSFFTKLENTSPMVKSKKQEIFRKLNSSGGGDSDMAAAQPGTEIFNLPAVTTSGSVSSRGHSFADPASNLGLEDIIRKALMGSFDDKVEDHGVVMSQPMGVVPGTANTSVVTSGETRREEGDPSPHSGGVCKPKLISKSNSRKSKSPIPGQGYLGTERPSSVSSVHSEGDYHRQTPGWAWEDRPSSTGSTQFPYNPLTMRMLSSTPPTPIACAPSAVNQAAPHQQNRIWEREPAPLLSAQYETLSDSDD.

A compositionally biased stretch (polar residues) spans 1–18 (MSSSGYPPNQGAFSTEQS). 2 disordered regions span residues 1-177 (MSSS…SKLS) and 206-231 (QQQLEEEAAKPPEPEKPVSPPPVEQK). Residues 1–373 (MSSSGYPPNQ…QRGAGLSATI (373 aa)) form an interaction with ZBTB33 and HEXIM1 region. Residues 51-64 (SQASQLLQQQQQQQ) are compositionally biased toward low complexity. Basic and acidic residues-rich tracts occupy residues 77–88 (PGSDRPQERRTS), 99–119 (VDHDSLESKRPRLEQVSDSHF), and 141–155 (ADAKKDPAFGGKHEA). Residue Ser-172 is modified to Phosphoserine. The stretch at 174 to 216 (SKLSKEELIQSMDRVDREIAKVEQQILKLKKKQQQLEEEAAKP) forms a coiled coil. Basic and acidic residues predominate over residues 212 to 221 (EAAKPPEPEK). At Ser-224 the chain carries Phosphoserine. Positions 254 to 312 (FEGLGPKVELPLYNQPSDTKVYHENIKTNQVMRKKLILFFKRRNHARKQREQKICQRYD) are interaction with SIN3A/B. Positions 299–328 (ARKQREQKICQRYDQLMEAWEKKVDRIENN) form a coiled coil. Residues 435 to 486 (QFMNVWTDHEKEIFKDKFIQHPKNFGLIASYLERKSVPDCVLYYYLTKKNEN) form the SANT 1 domain. Disordered regions lie at residues 497–632 (KRRG…TEEE) and 677–915 (NLLQ…GSIL). Positions 501 to 557 (RNQQIARPSQEEKVEEKEEDKAEKTEKKEEEKKDEEEKDEKEDSKENTKEKDKIDGT) form a coiled coil. 2 stretches are compositionally biased toward basic and acidic residues: residues 509 to 531 (SQEEKVEEKEEDKAEKTEKKEEE) and 541 to 556 (KEDSKENTKEKDKIDG). Residues 592–605 (EAAAASAAAAAATE) are compositionally biased toward low complexity. Over residues 606-617 (EPPPPLPPPPEP) the composition is skewed to pro residues. One can recognise an SANT 2 domain in the interval 623–674 (VETSRWTEEEMEVAKKGLVEHGRNWAAIAKMVGTKSEAQCKNFYFNYKRRHN). Residues 698-708 (QCESVASTVSA) show a composition bias toward polar residues. The span at 709–728 (QEDEDIEASNEEENPEDSEV) shows a compositional bias: acidic residues. The span at 752 to 768 (ELEPTTETAPSTSPSLA) shows a compositional bias: low complexity. The span at 781–792 (ETQVNDSISAET) shows a compositional bias: polar residues. The segment covering 820–859 (DSVDVEVRVPENHASKVEGDNTKERDLDRASEKVEPRDED) has biased composition (basic and acidic residues). 2 stretches are compositionally biased toward polar residues: residues 864 to 883 (QQINAQRPEPQSDNDSSATC) and 906 to 915 (SLLNPTGSIL). The segment at 988 to 1816 (RSSTSPCGTS…QGLPASRYNT (829 aa)) is interaction with ETO. Residue Ser-999 is modified to Phosphoserine. Positions 1022 to 1046 (VRLPTTRPTRPPPPLIPSSKTTVAS) are disordered. Residue Lys-1106 forms a Glycyl lysine isopeptide (Lys-Gly) (interchain with G-Cter in SUMO1); alternate linkage. Lys-1106 is covalently cross-linked (Glycyl lysine isopeptide (Lys-Gly) (interchain with G-Cter in SUMO2); alternate). Residue Ser-1111 is modified to Phosphoserine. Lys-1184 is covalently cross-linked (Glycyl lysine isopeptide (Lys-Gly) (interchain with G-Cter in SUMO2)). The tract at residues 1184–1204 (KGSISRMPIEDSSPEKGREEA) is disordered. Phosphoserine occurs at positions 1195, 1196, 1249, 1263, 1281, and 1322. At Lys-1336 the chain carries N6-acetyllysine. Residue Thr-1367 is modified to Phosphothreonine. Residue Lys-1389 forms a Glycyl lysine isopeptide (Lys-Gly) (interchain with G-Cter in SUMO2) linkage. Lys-1412 participates in a covalent cross-link: Glycyl lysine isopeptide (Lys-Gly) (interchain with G-Cter in SUMO2); alternate. At Lys-1412 the chain carries N6-acetyllysine; alternate. The tract at residues 1440–1459 (AGETVRSRHTSVVSSGPSVL) is disordered. A phosphoserine mark is found at Ser-1450 and Ser-1472. Positions 1488 to 1512 (YQNTMSRGSPMMNRTSDVTISSNKS) are enriched in polar residues. Positions 1488–1554 (YQNTMSRGSP…SPFDPHHRGS (67 aa)) are disordered. Residues 1501-2440 (RTSDVTISSN…QYETLSDSDD (940 aa)) are interaction with C1D. Lys-1518 is covalently cross-linked (Glycyl lysine isopeptide (Lys-Gly) (interchain with G-Cter in SUMO2)). Ser-1592 is modified (phosphoserine). 2 disordered regions span residues 1690 to 1759 (PRPY…SPSP) and 1884 to 1922 (SSAFPSGKPQPHSSVVYSEAGKDKGPPPKSRYEEELRTR). 2 stretches are compositionally biased toward basic and acidic residues: residues 1712–1729 (AEREREREREKERERERI) and 1903–1921 (AGKDKGPPPKSRYEEELRT). The short motif at 1933-1937 (IDVII) is the CORNR box 1 element. The tract at residues 1943-1969 (SDKDARERGSQSSDSSSSLSSHRYETP) is disordered. Positions 1952-1963 (SQSSDSSSSLSS) are enriched in low complexity. Ser-1977 and Ser-1981 each carry phosphoserine. The segment at 2006–2041 (PTRQYEGPLHHYRPQQESPSPQQQLPPSSQAEGMGQ) is disordered. Residues 2020–2035 (QQESPSPQQQLPPSSQ) are compositionally biased toward low complexity. Residues 2032 to 2115 (PSSQAEGMGQ…QAQSVHHQRP (84 aa)) are ID1. Residues 2047–2050 (RLIT) are required for interaction with RARA in the absence of its ligand. The short motif at 2055–2059 (ICQII) is the CORNR box 2 element. Positions 2067-2086 (QVSSQTPQQPPTSTFQNSPS) are enriched in low complexity. The tract at residues 2067 to 2155 (QVSSQTPQQP…PYEPISPPQV (89 aa)) is disordered. The segment covering 2087-2110 (ALVSTPVRTKTSNRYSPESQAQSV) has biased composition (polar residues). Phosphoserine is present on residues Ser-2102, Ser-2120, Ser-2136, Ser-2151, and Ser-2184. Positions 2124-2142 (LVDKSRGSRPGKSPERSHV) are enriched in basic and acidic residues. An ID2 region spans residues 2212–2273 (IFRKLNSSGG…EDIIRKALMG (62 aa)). A CORNR box 3 motif is present at residues 2263-2267 (LEDII). The disordered stretch occupies residues 2287–2440 (SQPMGVVPGT…QYETLSDSDD (154 aa)). The segment covering 2296–2305 (TANTSVVTSG) has biased composition (polar residues). Thr-2399 is subject to Phosphothreonine. Composition is skewed to polar residues over residues 2407–2418 (AVNQAAPHQQNR) and 2431–2440 (QYETLSDSDD). Ser-2436 and Ser-2438 each carry phosphoserine.

It belongs to the N-CoR nuclear receptor corepressors family. Forms a large corepressor complex that contains SIN3A/B and histone deacetylases HDAC1 and HDAC2. This complex associates with the thyroid receptor (TR) and the retinoid acid receptor (RAR) in the absence of ligand. Interacts directly with RARA; the interaction is facilitated with RARA trimethylation. Component of the N-Cor repressor complex, at least composed of CBFA2T3, HEXIM1, NCOR1, NCOR2, HDAC3, TBL1X, TBL1XR1, CORO2A and GPS2. Interacts with ZBTB33; the interaction serves to recruit the N-CoR complex to promoter regions containing methylated CpG dinucleotides. Interacts with TRIM28 and KDM3A. Interacts (via the RD1 domain) with BAZ1A (via its N-terminal); the interaction corepresses a number of NCOR1-regulated genes. Interacts with BCL6, C1D, DACH1, HEXIM1, HDAC7, RORA, RORC, SAP30, SIAH2, SIN3A and SIN3B. May interact with DEAF1. Interacts with RXRA. Interacts with SETD5. Interacts with VDR. Interacts with ZBTB7A. Interacts with AR. Interacts with HDAC3. Post-translationally, ubiquitinated; mediated by SIAH2 and leading to its subsequent proteasomal degradation.

The protein resides in the nucleus. Functionally, mediates transcriptional repression by certain nuclear receptors. Part of a complex which promotes histone deacetylation and the formation of repressive chromatin structures which may impede the access of basal transcription factors. Participates in the transcriptional repressor activity produced by BCL6. Recruited by ZBTB7A to the androgen response elements/ARE on target genes, negatively regulates androgen receptor signaling and androgen-induced cell proliferation. Mediates the NR1D1-dependent repression and circadian regulation of TSHB expression. The NCOR1-HDAC3 complex regulates the circadian expression of the core clock gene ARTNL/BMAL1 and the genes involved in lipid metabolism in the liver. In Homo sapiens (Human), this protein is Nuclear receptor corepressor 1 (NCOR1).